The primary structure comprises 472 residues: Glutamate--tRNA ligase 1 (472 aa).

Positions 9 to 19 match the 'HIGH' region motif; that stretch reads PSPTGLLHVGN. Residues 112–131 are compositionally biased toward basic and acidic residues; sequence AMAEKRPPRYDGTWRDRDPS. The tract at residues 112-133 is disordered; that stretch reads AMAEKRPPRYDGTWRDRDPSEA. Positions 238-242 match the 'KMSKS' region motif; that stretch reads KLSKR. ATP is bound at residue lysine 241.

Belongs to the class-I aminoacyl-tRNA synthetase family. Glutamate--tRNA ligase type 1 subfamily. Monomer.

The protein resides in the cytoplasm. It catalyses the reaction tRNA(Glu) + L-glutamate + ATP = L-glutamyl-tRNA(Glu) + AMP + diphosphate. Its function is as follows. Catalyzes the attachment of glutamate to tRNA(Glu) in a two-step reaction: glutamate is first activated by ATP to form Glu-AMP and then transferred to the acceptor end of tRNA(Glu). The polypeptide is Glutamate--tRNA ligase 1 (Gluconobacter oxydans (strain 621H) (Gluconobacter suboxydans)).